The following is a 205-amino-acid chain: Large ribosomal subunit protein uL4 (205 aa).

Residues 48–79 (KAQKSRSDVSGGGKKPWKQKGSGHARAGTTRS) are disordered.

This sequence belongs to the universal ribosomal protein uL4 family. As to quaternary structure, part of the 50S ribosomal subunit.

Its function is as follows. One of the primary rRNA binding proteins, this protein initially binds near the 5'-end of the 23S rRNA. It is important during the early stages of 50S assembly. It makes multiple contacts with different domains of the 23S rRNA in the assembled 50S subunit and ribosome. In terms of biological role, forms part of the polypeptide exit tunnel. The protein is Large ribosomal subunit protein uL4 of Methylococcus capsulatus (strain ATCC 33009 / NCIMB 11132 / Bath).